The primary structure comprises 249 residues: 5'-nucleotidase SurE (249 aa).

D8, D9, S39, and N91 together coordinate a divalent metal cation.

The protein belongs to the SurE nucleotidase family. A divalent metal cation serves as cofactor.

It localises to the cytoplasm. It carries out the reaction a ribonucleoside 5'-phosphate + H2O = a ribonucleoside + phosphate. In terms of biological role, nucleotidase that shows phosphatase activity on nucleoside 5'-monophosphates. The protein is 5'-nucleotidase SurE of Pseudomonas fluorescens (strain SBW25).